The chain runs to 366 residues: Uroporphyrinogen decarboxylase (366 aa).

Substrate contacts are provided by residues 28-32, Asp-78, Tyr-160, Thr-215, and His-333; that span reads RQAGR.

Belongs to the uroporphyrinogen decarboxylase family. As to quaternary structure, homodimer.

It localises to the cytoplasm. The catalysed reaction is uroporphyrinogen III + 4 H(+) = coproporphyrinogen III + 4 CO2. It participates in porphyrin-containing compound metabolism; protoporphyrin-IX biosynthesis; coproporphyrinogen-III from 5-aminolevulinate: step 4/4. Functionally, catalyzes the decarboxylation of four acetate groups of uroporphyrinogen-III to yield coproporphyrinogen-III. The chain is Uroporphyrinogen decarboxylase from Paraburkholderia xenovorans (strain LB400).